The primary structure comprises 214 residues: dITP/XTP pyrophosphatase (214 aa).

13 to 18 provides a ligand contact to substrate; sequence SHNAGK. Mg(2+) is bound by residues aspartate 45 and aspartate 74. Catalysis depends on aspartate 74, which acts as the Proton acceptor. Residues serine 75, 163-166, lysine 186, and 199-200 each bind substrate; these read FGYD and HR.

It belongs to the HAM1 NTPase family. In terms of assembly, homodimer. Mg(2+) serves as cofactor.

The enzyme catalyses XTP + H2O = XMP + diphosphate + H(+). It carries out the reaction dITP + H2O = dIMP + diphosphate + H(+). It catalyses the reaction ITP + H2O = IMP + diphosphate + H(+). Pyrophosphatase that catalyzes the hydrolysis of nucleoside triphosphates to their monophosphate derivatives, with a high preference for the non-canonical purine nucleotides XTP (xanthosine triphosphate), dITP (deoxyinosine triphosphate) and ITP. Seems to function as a house-cleaning enzyme that removes non-canonical purine nucleotides from the nucleotide pool, thus preventing their incorporation into DNA/RNA and avoiding chromosomal lesions. The polypeptide is dITP/XTP pyrophosphatase (Rhizobium meliloti (strain 1021) (Ensifer meliloti)).